The sequence spans 515 residues: 13S globulin seed storage protein (515 aa).

The N-terminal stretch at 1–22 (MSTKLILSFSLCLMVLSCSAQA) is a signal peptide. The segment at 23–96 (AQLWPWRKGQ…RYVIQPGGLL (74 aa)) is igE-binding epitope. 2 cysteine pairs are disulfide-bonded: Cys47–Cys80 and Cys123–Cys327. Positions 52 to 272 (LTASEPSRRV…FRDVDRETIS (221 aa)) constitute a Cupin type-1 1 domain. The segment at 97–172 (LPSYSNAPYI…REGDVIPSPA (76 aa)) is igE-binding epitope with a very strong IgE-binding activity. Disordered stretches follow at residues 123–156 (CPET…GDQH), 210–241 (LAGQ…ESDD), and 295–320 (PEDS…GRSN). 3 stretches are compositionally biased toward basic and acidic residues: residues 141-156 (HSRE…GDQH), 217-239 (GREE…SRES), and 295-316 (PEDS…ERGS). IgE-binding epitope regions lie at residues 173-248 (GVVQ…LIGA) and 249-320 (NILS…GRSN). In terms of domain architecture, Cupin type-1 2 spans 333–482 (QNVNRPSHAD…SYDISTEEAY (150 aa)). The interval 347 to 387 (RAGRINTVNSNNLPILEFLQLSAQHVVLYKNAIIGPRWNLN) is igE-binding epitope with a strong IgE-binding activity. IgE-binding epitope stretches follow at residues 407–457 (EGKS…PIAG), 440–476 (EWVE…SYDI), and 475–511 (DIST…ERER).

This sequence belongs to the 11S seed storage protein (globulins) family. In terms of assembly, homohexamer. Post-translationally, proteolytically processed from a single precursor to produce an acidic and a basic chain that are linked by a disulfide bond. Expressed in seeds (at protein level).

Its function is as follows. Seed storage protein. This Fagopyrum tataricum (Tartarian buckwheat) protein is 13S globulin seed storage protein.